A 125-amino-acid polypeptide reads, in one-letter code: Probable mercury resistance operon repressor (125 aa).

Positions 15-109 (VPCTHPDTTA…LARCLAADNA (95 aa)) constitute an HTH arsR-type domain. Positions 49-68 (SAECVEHAGISQPRVSVHLS) form a DNA-binding region, H-T-H motif. Hg(2+) contacts are provided by C69, C73, and C114.

Negatively regulates the mercuric reductase merA and the organolyase merB in the absence of mercuric ions. The polypeptide is Probable mercury resistance operon repressor (merR) (Streptomyces lividans).